The chain runs to 247 residues: EGF-like domain-containing protein C02B10.3 (247 aa).

An N-terminal signal peptide occupies residues 1 to 17 (MTGALCIVLFGVTMVTA). Residues 18 to 220 (ERPKIKDTHG…LCDKRCQKGH (203 aa)) are Extracellular-facing. EGF-like domains are found at residues 114 to 150 (FGTS…RFCE) and 180 to 213 (SGAS…DLCD). 4 disulfides stabilise this stretch: Cys-123-Cys-138, Cys-140-Cys-149, Cys-190-Cys-201, and Cys-203-Cys-212. A glycan (N-linked (GlcNAc...) asparagine) is linked at Asn-126. The helical transmembrane segment at 221 to 240 (VTCSTCSSFIPAALFAIILL) threads the bilayer. Over 241–247 (CVNKFNY) the chain is Cytoplasmic.

Its subcellular location is the membrane. The chain is EGF-like domain-containing protein C02B10.3 from Caenorhabditis elegans.